The following is a 244-amino-acid chain: Heat stress transcription factor B-3 (244 aa).

Residues 38–132 (PPPFLVKTYK…LMSNIRRRKS (95 aa)) mediate DNA binding. The interval 173 to 218 (TSSSFVYTALLDENKCLKNENELLSCELGKTKKKCKQLMELVERYR) is hydrophobic repeat HR-A/B. The short motif at 202–208 (KTKKKCK) is the Nuclear localization signal element. The disordered stretch occupies residues 216–244 (RYRGEDEDATDESDDEEDEGLKLFGVKLE). The span at 220–234 (EDEDATDESDDEEDE) shows a compositional bias: acidic residues. The short motif at 236-243 (LKLFGVKL) is the Nuclear export signal element.

It belongs to the HSF family. Class B subfamily. Homotrimer. In terms of processing, exhibits temperature-dependent phosphorylation.

It localises to the cytoplasm. Its subcellular location is the nucleus. Its function is as follows. Transcriptional regulator that specifically binds DNA sequence 5'-AGAAnnTTCT-3' known as heat shock promoter elements (HSE). The sequence is that of Heat stress transcription factor B-3 (HSFB3) from Arabidopsis thaliana (Mouse-ear cress).